Consider the following 215-residue polypeptide: Glycerol-3-phosphate acyltransferase (215 aa).

6 consecutive transmembrane segments (helical) span residues 3 to 23, 42 to 61, 68 to 90, 110 to 130, 134 to 154, and 162 to 182; these read LILL…LWIG, TNTF…LIDI, TLLP…FAVL, AGVL…VFVL, LFSM…ISVL, and LLPS…AIII.

Belongs to the PlsY family. In terms of assembly, probably interacts with PlsX.

Its subcellular location is the cell membrane. The enzyme catalyses an acyl phosphate + sn-glycerol 3-phosphate = a 1-acyl-sn-glycero-3-phosphate + phosphate. The protein operates within lipid metabolism; phospholipid metabolism. Catalyzes the transfer of an acyl group from acyl-phosphate (acyl-PO(4)) to glycerol-3-phosphate (G3P) to form lysophosphatidic acid (LPA). This enzyme utilizes acyl-phosphate as fatty acyl donor, but not acyl-CoA or acyl-ACP. This chain is Glycerol-3-phosphate acyltransferase, found in Streptococcus equi subsp. equi (strain 4047).